Reading from the N-terminus, the 609-residue chain is Aspartate--tRNA(Asp/Asn) ligase (609 aa).

E177 contacts L-aspartate. The interval 201-204 (QLFK) is aspartate. R223 provides a ligand contact to L-aspartate. ATP-binding positions include 223 to 225 (RDE) and Q232. H461 lines the L-aspartate pocket. E499 contacts ATP. An L-aspartate-binding site is contributed by R506. 551-554 (GVDR) contributes to the ATP binding site.

The protein belongs to the class-II aminoacyl-tRNA synthetase family. Type 1 subfamily. Homodimer.

It is found in the cytoplasm. It carries out the reaction tRNA(Asx) + L-aspartate + ATP = L-aspartyl-tRNA(Asx) + AMP + diphosphate. Its function is as follows. Aspartyl-tRNA synthetase with relaxed tRNA specificity since it is able to aspartylate not only its cognate tRNA(Asp) but also tRNA(Asn). Reaction proceeds in two steps: L-aspartate is first activated by ATP to form Asp-AMP and then transferred to the acceptor end of tRNA(Asp/Asn). The sequence is that of Aspartate--tRNA(Asp/Asn) ligase from Synechococcus sp. (strain CC9605).